A 127-amino-acid polypeptide reads, in one-letter code: uncharacterized protein (127 aa).

Polar residues predominate over residues Met1 to Thr17. Positions Met1 to Arg36 are disordered.

This is an uncharacterized protein from Treponema pallidum (strain Nichols).